Consider the following 278-residue polypeptide: Thioredoxin-related transmembrane protein 1 (278 aa).

The first 26 residues, 1 to 26, serve as a signal peptide directing secretion; it reads MAHLGRLMVPLAALVLLLWAVPGAHG. The Thioredoxin domain maps to 27–132; that stretch reads RRNNVRVLTD…FINFVSDKEW (106 aa). The Extracellular portion of the chain corresponds to 27–181; sequence RRNNVRVLTD…DLGIPAWGSY (155 aa). Residues C56 and C59 each act as nucleophile in the active site. Residues C56 and C59 are joined by a disulfide bond. The helical transmembrane segment at 182–202 threads the bilayer; it reads LVFAFATVLSGLLLGLCMIFV. Residues 203-278 are Cytoplasmic-facing; sequence ADCLCPSKRR…VGLPSATDTS (76 aa). Residues C205 and C207 are each lipidated (S-palmitoyl cysteine). Over residues 217 to 226 the composition is skewed to polar residues; that stretch reads QYAKKTSPEF. The segment at 217 to 278 is disordered; the sequence is QYAKKTSPEF…VGLPSATDTS (62 aa). The span at 235–251 shows a compositional bias: acidic residues; sequence EEQEADEEDVSEEEAED. S245 and S278 each carry phosphoserine.

As to quaternary structure, interacts with ATP2A2. In terms of processing, palmitoylated; palmitoylation is required for localization to mitochondria-associated endoplasmic reticulum membrane (MAM).

It is found in the endoplasmic reticulum membrane. It localises to the mitochondrion membrane. The protein localises to the secreted. It carries out the reaction Catalyzes the rearrangement of -S-S- bonds in proteins.. Thiredoxin domain-containing protein that participates in various redox reactions through the reversible oxidation of its active center dithiol to a disulfide and catalyze dithiol-disulfide exchange reactions. Acts as a key inhibitor of the alternative triglyceride biosynthesis pathway by inhibiting the activity of TMEM68/DIESL at the endoplasmic reticulum, thereby restricting accumulation of triacylglycerol. The alternative triglyceride biosynthesis pathway mediates formation of triacylglycerol from diacylglycerol and membrane phospholipids. Acts as a protein disulfide isomerase by catalyzing formation or reduction of disulfide bonds. Specifically mediates formation of disulfide bonds of transmembrane proteins at the endoplasmic reticulum membrane. Involved in ER-associated degradation (ERAD) via its protein disulfide isomerase activity by acting on folding-defective polypeptides at the endoplasmic reticulum membrane. Acts as a negative regulator of platelet aggregation following secretion in the extracellular space. Acts as a regulator of endoplasmic reticulum-mitochondria contact sites via its ability to regulate redox signals. Regulates endoplasmic reticulum-mitochondria Ca(2+) flux. This is Thioredoxin-related transmembrane protein 1 from Mus musculus (Mouse).